Reading from the N-terminus, the 705-residue chain is Catalase C (705 aa).

The tract at residues 1–31 is disordered; that stretch reads MAKKPSAPNNTKPATIHDQKATRGNGGELHQ. Active-site residues include histidine 88 and asparagine 161. Tyrosine 375 is a heme binding site.

This sequence belongs to the catalase family. HPII subfamily. Requires heme as cofactor.

The catalysed reaction is 2 H2O2 = O2 + 2 H2O. In terms of biological role, decomposes hydrogen peroxide into water and oxygen; serves to protect cells from the toxic effects of hydrogen peroxide. Could protect cells in nodules which have a high potential to produce hydrogen peroxide because of the strong reducing conditions required for nitrogen fixation and the action of several proteins. This is Catalase C (katE) from Rhizobium meliloti (strain 1021) (Ensifer meliloti).